The sequence spans 215 residues: Protein C' (215 aa).

Disordered regions lie at residues 12-34 (MPSF…SRSR) and 51-71 (SEGT…QALP). An involved in self-degradation and in host STAT1 degradation region spans residues 15–22 (FLKKILKL). The span at 51-65 (SEGTEAGSTTPSTLP) shows a compositional bias: polar residues.

The protein belongs to the respirovirus protein C family. As to quaternary structure, the different isoforms interact (via C-terminus) with unphosphorylated and phosphorylated human STAT1 (via N-terminus), favoring the formation of parallel STAT1 homodimers. The different isoforms do not interact with host STAT2. C protein interacts with L protein; this interaction has an inhibitory effect on viral transcription and replication. Y1 and Y2 proteins are produced not only by alternative initiation, but also by proteolytic cleavage of C'. Only alternative initiation is detected in vitro, whereas in vivo cleavage seems to be predominant.

The protein resides in the host cytoplasm. Its function is as follows. The different products prevent the establishment of cellular antiviral state by blocking the interferon-alpha/beta (IFN-alpha/beta) and IFN-gamma signaling pathways. They inhibit IFN-alpha/beta induced tyrosine phosphorylation of STAT1 and STAT2. Blocking the IFN-alpha/beta pathway requires binding to STAT1 in the cytoplasm. They inhibit IFN-gamma induced serine phosphorylation of STAT1. Block the IFN-gamma pathway by binding to and stabilizing the parallel form of the STAT1 dimer, further inducing high-molecular-weight complex formation and inhibition of transcription by IFN-gamma. May also have a role in preventing the cell to enter apoptosis. Modulate regulation of viral transcription and replication. Overexpression inhibits the viral RNA polymerase. The absence of all C', C, Y1 and Y2 proteins leads to viral delayed growth. Plays an important role in virion particles release. Modulates virion shape. The protein is Protein C' (P/V/C) of Sendai virus (strain Harris) (SeV).